A 932-amino-acid polypeptide reads, in one-letter code: ER degradation-enhancing alpha-mannosidase-like protein 3 (932 aa).

The first 41 residues, Met1–Ala41, serve as a signal peptide directing secretion. An N-linked (GlcNAc...) asparagine glycan is attached at Asn118. Glu146 functions as the Proton donor in the catalytic mechanism. Residue Asn195 is glycosylated (N-linked (GlcNAc...) asparagine). Residue Asp293 is part of the active site. Glu387 (proton donor) is an active-site residue. Residue Glu405 is part of the active site. A Ca(2+)-binding site is contributed by Thr491. 2 N-linked (GlcNAc...) asparagine glycosylation sites follow: Asn504 and Asn511. Residues Leu674 to Ile779 enclose the PA domain. Residues Ser790–Glu799 are compositionally biased toward basic and acidic residues. A disordered region spans residues Ser790–Gln908. Asn810 and Asn814 each carry an N-linked (GlcNAc...) asparagine glycan. Positions Ser812–Gln825 are enriched in low complexity. Over residues Ala856 to Gln890 the composition is skewed to polar residues. A glycan (N-linked (GlcNAc...) asparagine) is linked at Asn900. Positions Lys929 to Leu932 match the Prevents secretion from ER motif.

The protein belongs to the glycosyl hydrolase 47 family. Ca(2+) serves as cofactor.

The protein resides in the endoplasmic reticulum lumen. The enzyme catalyses N(4)-(alpha-D-Man-(1-&gt;2)-alpha-D-Man-(1-&gt;2)-alpha-D-Man-(1-&gt;3)-[alpha-D-Man-(1-&gt;2)-alpha-D-Man-(1-&gt;3)-[alpha-D-Man-(1-&gt;2)-alpha-D-Man-(1-&gt;6)]-alpha-D-Man-(1-&gt;6)]-beta-D-Man-(1-&gt;4)-beta-D-GlcNAc-(1-&gt;4)-beta-D-GlcNAc)-L-asparaginyl-[protein] (N-glucan mannose isomer 9A1,2,3B1,2,3) + 4 H2O = N(4)-(alpha-D-Man-(1-&gt;3)-[alpha-D-Man-(1-&gt;3)-[alpha-D-Man-(1-&gt;6)]-alpha-D-Man-(1-&gt;6)]-beta-D-Man-(1-&gt;4)-beta-D-GlcNAc-(1-&gt;4)-beta-D-GlcNAc)-L-asparaginyl-[protein] (N-glucan mannose isomer 5A1,2) + 4 beta-D-mannose. It catalyses the reaction N(4)-(alpha-D-Man-(1-&gt;2)-alpha-D-Man-(1-&gt;2)-alpha-D-Man-(1-&gt;3)-[alpha-D-Man-(1-&gt;3)-[alpha-D-Man-(1-&gt;2)-alpha-D-Man-(1-&gt;6)]-alpha-D-Man-(1-&gt;6)]-beta-D-Man-(1-&gt;4)-beta-D-GlcNAc-(1-&gt;4)-beta-D-GlcNAc)-L-asparaginyl-[protein] (N-glucan mannose isomer 8A1,2,3B1,3) + 3 H2O = N(4)-(alpha-D-Man-(1-&gt;3)-[alpha-D-Man-(1-&gt;3)-[alpha-D-Man-(1-&gt;6)]-alpha-D-Man-(1-&gt;6)]-beta-D-Man-(1-&gt;4)-beta-D-GlcNAc-(1-&gt;4)-beta-D-GlcNAc)-L-asparaginyl-[protein] (N-glucan mannose isomer 5A1,2) + 3 beta-D-mannose. It functions in the pathway protein modification; protein glycosylation. Its function is as follows. Involved in endoplasmic reticulum-associated degradation (ERAD). Accelerates the glycoprotein ERAD by proteasomes, by catalyzing mannose trimming from Man8GlcNAc2 to Man7GlcNAc2 in the N-glycans. May also participate in mannose trimming from all glycoproteins and not just misfolded ones targeted to ERAD. May have alpha 1,2-mannosidase activity. The polypeptide is ER degradation-enhancing alpha-mannosidase-like protein 3 (EDEM3) (Homo sapiens (Human)).